The sequence spans 181 residues: NADH-quinone oxidoreductase subunit I 2 (181 aa).

2 4Fe-4S ferredoxin-type domains span residues 44-74 (LNRYPDGLEKCIGCELCAWACPADAIYVEGA) and 90-119 (RVYQINYLRCIGCGLCVEACPTRALTMTND). The [4Fe-4S] cluster site is built by Cys-54, Cys-57, Cys-60, Cys-64, Cys-99, Cys-102, Cys-105, and Cys-109.

This sequence belongs to the complex I 23 kDa subunit family. As to quaternary structure, NDH-1 is composed of 14 different subunits. Subunits NuoA, H, J, K, L, M, N constitute the membrane sector of the complex. [4Fe-4S] cluster is required as a cofactor.

The protein localises to the cell membrane. The catalysed reaction is a quinone + NADH + 5 H(+)(in) = a quinol + NAD(+) + 4 H(+)(out). In terms of biological role, NDH-1 shuttles electrons from NADH, via FMN and iron-sulfur (Fe-S) centers, to quinones in the respiratory chain. The immediate electron acceptor for the enzyme in this species is believed to be menaquinone. Couples the redox reaction to proton translocation (for every two electrons transferred, four hydrogen ions are translocated across the cytoplasmic membrane), and thus conserves the redox energy in a proton gradient. The protein is NADH-quinone oxidoreductase subunit I 2 of Mycolicibacterium paratuberculosis (strain ATCC BAA-968 / K-10) (Mycobacterium paratuberculosis).